The sequence spans 363 residues: Spindle pole body component SPC42 (363 aa).

Residues 62–136 (INKAVQQNKE…DANSTFKEMR (75 aa)) are a coiled coil. A disordered region spans residues 160 to 184 (PKHRAPDATGNPRTTNKVSNTSDQD). The segment covering 170–182 (NPRTTNKVSNTSD) has biased composition (polar residues). Ser-213, Ser-217, Ser-284, and Ser-329 each carry phosphoserine. A coiled-coil region spans residues 248-297 (DDIMMYESAELKRVEEEIEELKRKILVRKKHDLRKLSLNNQLQELQSMMD). Residues 310-363 (HNHATHRHSSQSSRDYSPSSDACLECSNDLYEKNRVKPENNMSETFATPTPNNR) are disordered. Residues 319 to 329 (SQSSRDYSPSS) show a composition bias toward low complexity. Residues 349–363 (NNMSETFATPTPNNR) are compositionally biased toward polar residues.

Belongs to the SPC42 family. In terms of assembly, component of the SPC110 complex containing at least CMD1, SPC29, SPC42 and SCP110.

It localises to the nucleus. Its subcellular location is the cytoplasm. The protein localises to the cytoskeleton. It is found in the microtubule organizing center. The protein resides in the spindle pole body. Its function is as follows. Forms a polymeric layer at the periphery of the spindle pole body (SPB) central plaque which has an essential function during SPB duplication and may facilitate attachment of the SPB to the nuclear membrane. In Saccharomyces cerevisiae (strain RM11-1a) (Baker's yeast), this protein is Spindle pole body component SPC42 (SPC42).